A 258-amino-acid polypeptide reads, in one-letter code: 4-hydroxy-tetrahydrodipicolinate reductase (258 aa).

Residues 9-14, 91-93, and 115-118 contribute to the NAD(+) site; these read GASGRM, GTT, and SPNM. The active-site Proton donor/acceptor is histidine 148. Histidine 149 lines the (S)-2,3,4,5-tetrahydrodipicolinate pocket. Lysine 152 serves as the catalytic Proton donor. 158-159 lines the (S)-2,3,4,5-tetrahydrodipicolinate pocket; that stretch reads GT.

It belongs to the DapB family.

It localises to the cytoplasm. It catalyses the reaction (S)-2,3,4,5-tetrahydrodipicolinate + NAD(+) + H2O = (2S,4S)-4-hydroxy-2,3,4,5-tetrahydrodipicolinate + NADH + H(+). The enzyme catalyses (S)-2,3,4,5-tetrahydrodipicolinate + NADP(+) + H2O = (2S,4S)-4-hydroxy-2,3,4,5-tetrahydrodipicolinate + NADPH + H(+). It functions in the pathway amino-acid biosynthesis; L-lysine biosynthesis via DAP pathway; (S)-tetrahydrodipicolinate from L-aspartate: step 4/4. Its function is as follows. Catalyzes the conversion of 4-hydroxy-tetrahydrodipicolinate (HTPA) to tetrahydrodipicolinate. The chain is 4-hydroxy-tetrahydrodipicolinate reductase from Lawsonia intracellularis (strain PHE/MN1-00).